Here is a 219-residue protein sequence, read N- to C-terminus: Small ribosomal subunit protein uS3c (219 aa).

The KH type-2 domain maps to 47-119 (VRKYVRTAEN…KFIISLAEVE (73 aa)).

This sequence belongs to the universal ribosomal protein uS3 family. As to quaternary structure, part of the 30S ribosomal subunit.

The protein resides in the plastid. It is found in the chloroplast. This chain is Small ribosomal subunit protein uS3c (rps3), found in Staurastrum punctulatum (Green alga).